Here is a 907-residue protein sequence, read N- to C-terminus: MLVGADDKSLLARFYHADRALTAVASELDSFDGRAEPVRCTRLVGRLRQGQDRVLAITNQIMDELLGEDRAARAFRAKFPEEVLQESLAGQLWFGAECLAAGSSIMNREVESATMRPLAKAVTKSLDNVRNLLREQCLRNNTPNSLTLRLDVNDAATEQLYESLKIFDRLFAEFELLYVSAMVQVKSKQEYEMQELICVLFSETLQRALKVGLLEQEQVDSYDPALMFSIPRLAIVAGLVIFKEGPLNMDQPADDISEMFRPFRKLLIKMRDLLRTLTKHELYQLEKLLCTNEEISLKEQQIICDGNEIVGGGQSPSAAPNPARDDTVVIVTTSATVNSSDNLRGQEPQEDISSFYTSNNRRTVDSEPNEDDDVSESNDEDEDEGEEVDEDDPANILKDALVTSDCASGYLIPNTNFGNLLQTNEAPLTDSFIATDEELKLASGAASSHARIEQILSESNQKLTDSGLGTANPSLDHSPELETERPVTSSHPIAQSSSSSSEEEGEVDEYDEDDSESTLCEPKPHHTKHQRRHRHHHHHHRKHYSKHRSSAAGSAGTSGTTCSAAERQISSCDTSPSSGGLPSECGSSTSGGSSGNSSGGSGDADAAQEVAMAIRAAGRIKFKTTENLLHRLFVCIAGVADQLQTNFAADLRQMLKSVFVINSSPPEPEDPPEPAANSTDKPKEPDPADLFEFRASEQDVITNSGGSSQSIYSAEEVNAEDPHDSVFGSPPGGASPVRASSAPRTMMTTAASSENGSVTVNVSVSVVTAGSGGSGSGSSRSSQERSVSLSETSIVVDGSGGNTEGTALLVPRESTPKSVQSEQSGQRGMMEERRMPEAPPRWIPDGDAPRCMACASSFTPFRRRHHCRNCGGVFCGGCSSASAPLPKYGLTKAVRVCRECFVREVGV.

Disordered regions lie at residues 339–395 (SSDN…DPAN), 463–604 (LTDS…SGDA), 662–688 (NSSPPEPEDPPEPAANSTDKPKEPDPA), 716–756 (EVNA…SENG), and 770–834 (GSGG…EERR). The span at 351 to 361 (DISSFYTSNNR) shows a compositional bias: polar residues. A compositionally biased stretch (acidic residues) spans 367–393 (EPNEDDDVSESNDEDEDEGEEVDEDDP). Polar residues-rich tracts occupy residues 463–475 (LTDSGLGTANPSL) and 486–495 (PVTSSHPIAQ). The span at 501 to 516 (SEEEGEVDEYDEDDSE) shows a compositional bias: acidic residues. The span at 525-549 (HHTKHQRRHRHHHHHHRKHYSKHRS) shows a compositional bias: basic residues. Positions 550–565 (SAAGSAGTSGTTCSAA) are enriched in low complexity. Residues 568–580 (QISSCDTSPSSGG) are compositionally biased toward polar residues. Positions 592–602 (GSSGNSSGGSG) are enriched in gly residues. Positions 742-751 (APRTMMTTAA) are enriched in polar residues. Positions 777 to 793 (GSSRSSQERSVSLSETS) are enriched in low complexity. Polar residues predominate over residues 816-826 (PKSVQSEQSGQ). Residues 845–905 (DGDAPRCMAC…VCRECFVREV (61 aa)) form an FYVE-type zinc finger. Zn(2+) is bound by residues C851, C854, C867, C870, C875, C878, C897, and C900.

This sequence belongs to the lst-2 family.

Its function is as follows. Negative regulator of epidermal growth factor receptor (EGFR) signaling. The chain is Lateral signaling target protein 2 homolog from Culex quinquefasciatus (Southern house mosquito).